A 194-amino-acid polypeptide reads, in one-letter code: MSAQYARRCGWTCHLPFDPTIPPNLRHWVTGEGSLTARLVAASERFRVRRLFQASARPFLDEWQVLGQCGREPALTREVLLICDEQPAIYAHTVVRERHARRDWPFLRGLGERPLGGRLFVDPAVRRDPFQFARLLPHHPLRQALLRILPAMAPVPMLPARRSVFRRGAGVMLVTEVFLPDLLTRPSRGLGQRY.

3 residues coordinate substrate: Arg77, Leu115, and Glu176.

Belongs to the UbiC family.

Its subcellular location is the cytoplasm. The catalysed reaction is chorismate = 4-hydroxybenzoate + pyruvate. It participates in cofactor biosynthesis; ubiquinone biosynthesis. Removes the pyruvyl group from chorismate, with concomitant aromatization of the ring, to provide 4-hydroxybenzoate (4HB) for the ubiquinone pathway. In Cupriavidus pinatubonensis (strain JMP 134 / LMG 1197) (Cupriavidus necator (strain JMP 134)), this protein is Probable chorismate pyruvate-lyase.